The primary structure comprises 156 residues: ATP synthase subunit b (156 aa).

A helical transmembrane segment spans residues 13-33; sequence AFIIFVWCCMKFVWPPLMAAI.

This sequence belongs to the ATPase B chain family. In terms of assembly, F-type ATPases have 2 components, F(1) - the catalytic core - and F(0) - the membrane proton channel. F(1) has five subunits: alpha(3), beta(3), gamma(1), delta(1), epsilon(1). F(0) has three main subunits: a(1), b(2) and c(10-14). The alpha and beta chains form an alternating ring which encloses part of the gamma chain. F(1) is attached to F(0) by a central stalk formed by the gamma and epsilon chains, while a peripheral stalk is formed by the delta and b chains.

The protein resides in the cell inner membrane. Functionally, f(1)F(0) ATP synthase produces ATP from ADP in the presence of a proton or sodium gradient. F-type ATPases consist of two structural domains, F(1) containing the extramembraneous catalytic core and F(0) containing the membrane proton channel, linked together by a central stalk and a peripheral stalk. During catalysis, ATP synthesis in the catalytic domain of F(1) is coupled via a rotary mechanism of the central stalk subunits to proton translocation. Its function is as follows. Component of the F(0) channel, it forms part of the peripheral stalk, linking F(1) to F(0). This Aeromonas salmonicida (strain A449) protein is ATP synthase subunit b.